The sequence spans 544 residues: Probable protein kinase UbiB (544 aa).

The Protein kinase domain maps to 123–501; the sequence is DFDIKPLASA…KRQQAKGQFL (379 aa). Residues 129–137 and K152 each bind ATP; that span reads LASASIAQV. The active-site Proton acceptor is the D287. Residues 515 to 537 form a helical membrane-spanning segment; the sequence is LLTSNITVLASISAATGAAFWLF.

This sequence belongs to the ABC1 family. UbiB subfamily.

It is found in the cell inner membrane. The protein operates within cofactor biosynthesis; ubiquinone biosynthesis [regulation]. In terms of biological role, is probably a protein kinase regulator of UbiI activity which is involved in aerobic coenzyme Q (ubiquinone) biosynthesis. This Aliivibrio fischeri (strain MJ11) (Vibrio fischeri) protein is Probable protein kinase UbiB.